The primary structure comprises 585 residues: Formate--tetrahydrofolate ligase (585 aa).

65-72 (TPHGEGKT) serves as a coordination point for ATP.

It belongs to the formate--tetrahydrofolate ligase family.

It carries out the reaction (6S)-5,6,7,8-tetrahydrofolate + formate + ATP = (6R)-10-formyltetrahydrofolate + ADP + phosphate. It participates in one-carbon metabolism; tetrahydrofolate interconversion. This is Formate--tetrahydrofolate ligase from Shewanella baltica (strain OS195).